A 560-amino-acid chain; its full sequence is Vacuolar protein 8 (560 aa).

Gly-2 carries N-myristoyl glycine lipidation. The S-palmitoyl cysteine moiety is linked to residue Cys-4. 9 ARM repeats span residues 39–76 (NRAE…FAEI), 77–116 (TERD…NLAV), 118–157 (TDNK…NLAT), 159–198 (EENK…NMTH), 200–239 (DENR…NIAV), 243–282 (NRRK…NLAS), 284–323 (EKYQ…NISI), 325–365 (PQNE…NLAA), and 409–448 (DELK…NLSS).

It belongs to the beta-catenin family.

Its subcellular location is the vacuole membrane. Functions in both vacuole inheritance and protein targeting from the cytoplasm to vacuole. The polypeptide is Vacuolar protein 8 (VAC8) (Chaetomium globosum (strain ATCC 6205 / CBS 148.51 / DSM 1962 / NBRC 6347 / NRRL 1970) (Soil fungus)).